The chain runs to 929 residues: Ribonucleoside-diphosphate reductase large chain (929 aa).

In terms of domain architecture, ATP-cone spans 1–92 (MYVKKRDGRQ…VSNLHKQTKK (92 aa)). Residues 5–6 (KR), 11–17 (ERVQFDK), threonine 53, and aspartate 57 contribute to the ATP site. GDP is bound by residues serine 202 and serine 217. Cysteine 218 and cysteine 444 are joined by a disulfide. DTTP contacts are provided by residues 226-228 (DSI), lysine 243, arginine 256, and 263-264 (AG). Asparagine 427 provides a ligand contact to GDP. Catalysis depends on asparagine 427, which acts as the Proton acceptor. The active-site Cysteine radical intermediate is the cysteine 429. Residues glutamate 431 and 605–608 (TAST) contribute to the GDP site. Residue glutamate 431 is the Proton acceptor of the active site. Residues 789-904 (ENTSGPRPYA…RDENIYSNAP (116 aa)) form a disordered region. A compositionally biased stretch (polar residues) spans 800–809 (TGVSGTSTPI). Over residues 868–884 (VKTEDIGSPLLERKEGQ) the composition is skewed to basic and acidic residues. Residues 885–894 (NEDVDEDSQE) are compositionally biased toward acidic residues.

This sequence belongs to the ribonucleoside diphosphate reductase large chain family.

It catalyses the reaction a 2'-deoxyribonucleoside 5'-diphosphate + [thioredoxin]-disulfide + H2O = a ribonucleoside 5'-diphosphate + [thioredoxin]-dithiol. Under complex allosteric control mediated by deoxynucleoside triphosphates and ATP binding to separate specificity and activation sites on the large subunit. The type of nucleotide bound at the specificity site determines substrate preference. It seems probable that ATP makes the enzyme reduce CDP and UDP, dGTP favors ADP reduction and dTTP favors GDP reduction. Stimulated by ATP and inhibited by dATP binding to the activity site. Functionally, provides the precursors necessary for DNA synthesis. Catalyzes the biosynthesis of deoxyribonucleotides from the corresponding ribonucleotides. This chain is Ribonucleoside-diphosphate reductase large chain (rnr-1), found in Neurospora crassa (strain ATCC 24698 / 74-OR23-1A / CBS 708.71 / DSM 1257 / FGSC 987).